The following is a 1105-amino-acid chain: DNA polymerase delta catalytic subunit (1105 aa).

The tract at residues 1 to 46 (MSSGGRGGKRRGAPPPGPSGAAAKRAHPGGTPQPPPPAATAAAPVA) is disordered. The Zn(2+) site is built by Cys-1015, Cys-1018, Cys-1030, and Cys-1033. Residues 1015-1033 (CLGCKAVISGSNQTLCFHC) form a CysA-type zinc finger. Positions 1062, 1065, 1075, and 1080 each coordinate [4Fe-4S] cluster. The CysB motif signature appears at 1062-1080 (CQECQGSLHQDVLCTSRDC).

It belongs to the DNA polymerase type-B family. In terms of assembly, heterodimer with subunits of 125 kDa and 50 kDa. The 125 kDa subunit contains the polymerase active site and most likely the active site for the 3'-5' exonuclease activity. [4Fe-4S] cluster serves as cofactor.

Its subcellular location is the nucleus. The enzyme catalyses DNA(n) + a 2'-deoxyribonucleoside 5'-triphosphate = DNA(n+1) + diphosphate. Functionally, this polymerase possesses two enzymatic activities: DNA synthesis (polymerase) and an exonucleolytic activity that degrades single-stranded DNA in the 3'- to 5'-direction. The protein is DNA polymerase delta catalytic subunit (POLD1) of Oryza sativa subsp. japonica (Rice).